The primary structure comprises 560 residues: Dihydroxy-acid dehydratase (560 aa).

Position 50 (cysteine 50) interacts with [2Fe-2S] cluster. Residue aspartate 82 coordinates Mg(2+). Cysteine 123 is a binding site for [2Fe-2S] cluster. Residues aspartate 124 and lysine 125 each contribute to the Mg(2+) site. N6-carboxylysine is present on lysine 125. Residue cysteine 195 coordinates [2Fe-2S] cluster. Position 446 (glutamate 446) interacts with Mg(2+). Residue serine 472 is the Proton acceptor of the active site.

This sequence belongs to the IlvD/Edd family. Homodimer. [2Fe-2S] cluster is required as a cofactor. The cofactor is Mg(2+).

It catalyses the reaction (2R)-2,3-dihydroxy-3-methylbutanoate = 3-methyl-2-oxobutanoate + H2O. It carries out the reaction (2R,3R)-2,3-dihydroxy-3-methylpentanoate = (S)-3-methyl-2-oxopentanoate + H2O. The protein operates within amino-acid biosynthesis; L-isoleucine biosynthesis; L-isoleucine from 2-oxobutanoate: step 3/4. It functions in the pathway amino-acid biosynthesis; L-valine biosynthesis; L-valine from pyruvate: step 3/4. Its function is as follows. Functions in the biosynthesis of branched-chain amino acids. Catalyzes the dehydration of (2R,3R)-2,3-dihydroxy-3-methylpentanoate (2,3-dihydroxy-3-methylvalerate) into 2-oxo-3-methylpentanoate (2-oxo-3-methylvalerate) and of (2R)-2,3-dihydroxy-3-methylbutanoate (2,3-dihydroxyisovalerate) into 2-oxo-3-methylbutanoate (2-oxoisovalerate), the penultimate precursor to L-isoleucine and L-valine, respectively. The protein is Dihydroxy-acid dehydratase of Leptothrix cholodnii (strain ATCC 51168 / LMG 8142 / SP-6) (Leptothrix discophora (strain SP-6)).